Consider the following 234-residue polypeptide: Urease accessory protein UreF (234 aa).

The protein belongs to the UreF family. As to quaternary structure, ureD, UreF and UreG form a complex that acts as a GTP-hydrolysis-dependent molecular chaperone, activating the urease apoprotein by helping to assemble the nickel containing metallocenter of UreC. The UreE protein probably delivers the nickel.

Its subcellular location is the cytoplasm. Functionally, required for maturation of urease via the functional incorporation of the urease nickel metallocenter. In Kocuria rhizophila (strain ATCC 9341 / DSM 348 / NBRC 103217 / DC2201), this protein is Urease accessory protein UreF.